We begin with the raw amino-acid sequence, 435 residues long: Nuclear distribution protein nudF 2 (435 aa).

One can recognise a LisH domain in the interval 9–41; the sequence is QAEELHKSIIAYLSANGLPETTAILRKELGVTE. WD repeat units lie at residues 86 to 125, 128 to 171, 175 to 214, 217 to 256, 280 to 320, 322 to 361, 366 to 396, and 397 to 434; these read SHRD…LEVT, GHTR…KNIR, GHDH…CVKT, GHTG…ENKL, APLA…LMTL, GHDN…KCVK, THGG…VRQI, and PDVA…QIFA.

This sequence belongs to the WD repeat LIS1/nudF family. As to quaternary structure, self-associates. Interacts with nudE and dynein.

Its subcellular location is the cytoplasm. It localises to the cytoskeleton. The protein resides in the spindle pole. Functionally, positively regulates the activity of the minus-end directed microtubule motor protein dynein. May enhance dynein-mediated microtubule sliding by targeting dynein to the microtubule plus end. Required for nuclear migration during vegetative growth as well as development. Required for retrograde early endosome (EE) transport from the hyphal tip. Required for localization of dynein to the mitotic spindle poles. Recruits additional proteins to the dynein complex at SPBs. The sequence is that of Nuclear distribution protein nudF 2 from Aspergillus clavatus (strain ATCC 1007 / CBS 513.65 / DSM 816 / NCTC 3887 / NRRL 1 / QM 1276 / 107).